A 901-amino-acid chain; its full sequence is Protein translocase subunit SecA (901 aa).

ATP-binding positions include Gln-87, 105–109 (GEGKT), and Asp-512. Residues 859–901 (HQDDDSAAAAALAAQTGERKVGRNDPCPCGSGKKYKQCHGRLQ) are disordered. 4 residues coordinate Zn(2+): Cys-885, Cys-887, Cys-896, and His-897. Basic residues predominate over residues 891 to 901 (KKYKQCHGRLQ).

This sequence belongs to the SecA family. As to quaternary structure, monomer and homodimer. Part of the essential Sec protein translocation apparatus which comprises SecA, SecYEG and auxiliary proteins SecDF-YajC and YidC. Requires Zn(2+) as cofactor.

The protein resides in the cell inner membrane. It localises to the cytoplasm. The catalysed reaction is ATP + H2O + cellular proteinSide 1 = ADP + phosphate + cellular proteinSide 2.. In terms of biological role, part of the Sec protein translocase complex. Interacts with the SecYEG preprotein conducting channel. Has a central role in coupling the hydrolysis of ATP to the transfer of proteins into and across the cell membrane, serving both as a receptor for the preprotein-SecB complex and as an ATP-driven molecular motor driving the stepwise translocation of polypeptide chains across the membrane. This Escherichia coli O139:H28 (strain E24377A / ETEC) protein is Protein translocase subunit SecA.